Consider the following 444-residue polypeptide: uncharacterized protein (444 aa).

Over residues 1 to 11 (MASSAGRDKLR) the composition is skewed to basic and acidic residues. The interval 1 to 35 (MASSAGRDKLRSRGQRVFAFGSSTPRDLSHMSKVP) is disordered.

This is an uncharacterized protein from Caenorhabditis elegans.